Here is a 220-residue protein sequence, read N- to C-terminus: NADH-quinone oxidoreductase subunit I (220 aa).

4Fe-4S ferredoxin-type domains lie at 71–102 (LQRLLDSGSERCIGCGLCEKICTSNCIRIITH) and 112–141 (DSYTINLGRCIYCGLCAEVCPELAIVMGNR). Residues cysteine 82, cysteine 85, cysteine 88, cysteine 92, cysteine 121, cysteine 124, cysteine 127, and cysteine 131 each coordinate [4Fe-4S] cluster. Residues 187–220 (MQATPLDYVQEPSKEESKEETPTNPESNKGDENV) form a disordered region. Basic and acidic residues predominate over residues 198-207 (PSKEESKEET).

Belongs to the complex I 23 kDa subunit family. As to quaternary structure, NDH-1 is composed of 14 different subunits. Subunits NuoA, H, J, K, L, M, N constitute the membrane sector of the complex. The cofactor is [4Fe-4S] cluster.

The protein resides in the cell inner membrane. It carries out the reaction a quinone + NADH + 5 H(+)(in) = a quinol + NAD(+) + 4 H(+)(out). Functionally, NDH-1 shuttles electrons from NADH, via FMN and iron-sulfur (Fe-S) centers, to quinones in the respiratory chain. The immediate electron acceptor for the enzyme in this species is believed to be ubiquinone. Couples the redox reaction to proton translocation (for every two electrons transferred, four hydrogen ions are translocated across the cytoplasmic membrane), and thus conserves the redox energy in a proton gradient. This is NADH-quinone oxidoreductase subunit I from Helicobacter pylori (strain HPAG1).